The following is a 146-amino-acid chain: Large-conductance mechanosensitive channel (146 aa).

Transmembrane regions (helical) follow at residues 15–35 (VSLA…TSLV) and 81–101 (GIFI…FIII).

The protein belongs to the MscL family. In terms of assembly, homopentamer.

The protein localises to the cell membrane. Its function is as follows. Channel that opens in response to stretch forces in the membrane lipid bilayer. May participate in the regulation of osmotic pressure changes within the cell. This Clostridium beijerinckii (strain ATCC 51743 / NCIMB 8052) (Clostridium acetobutylicum) protein is Large-conductance mechanosensitive channel.